We begin with the raw amino-acid sequence, 201 residues long: MSSLAAAHATNAVNALLQSVLPGSASVNAERKKTSRDKGSKAQLIDRNLKKRVEVQEKDVYRIKKREKKMLRKKISGRKEVQEDIEQKAKLQVLRKHQVDNSLTDHEKSYLDKVVKKNVRNLKSWDYDDKEELLDLQKQILANSEDSKKVRKVKSRRQKKKQFKEKLPQSIQDHRYKALTPGLAPVGASDEEESEDEDEDY.

Disordered stretches follow at residues 24–43 and 147–201; these read SASVNAERKKTSRDKGSKAQ and SKKV…DEDY. Positions 29-40 are enriched in basic and acidic residues; the sequence is AERKKTSRDKGS. Residues 149–163 are compositionally biased toward basic residues; the sequence is KVRKVKSRRQKKKQF. Residues 164 to 176 are compositionally biased toward basic and acidic residues; the sequence is KEKLPQSIQDHRY. Over residues 189 to 201 the composition is skewed to acidic residues; the sequence is SDEEESEDEDEDY.

It belongs to the RRT14 family.

Its subcellular location is the nucleus. It localises to the nucleolus. Functionally, involved in ribosome biogenesis, probably through modulation of rDNA transcription. The chain is Regulator of rDNA transcription 14 (RRT14) from Kluyveromyces lactis (strain ATCC 8585 / CBS 2359 / DSM 70799 / NBRC 1267 / NRRL Y-1140 / WM37) (Yeast).